The sequence spans 543 residues: Cytochrome P450 307a1 (543 aa).

A Phosphoserine modification is found at Ser-219. The tract at residues Phe-440 to Glu-460 is disordered. A compositionally biased stretch (polar residues) spans Pro-449–Glu-460. Cys-485 is a binding site for heme.

This sequence belongs to the cytochrome P450 family. Heme is required as a cofactor.

The protein resides in the endoplasmic reticulum membrane. It localises to the microsome membrane. In terms of biological role, required for correct development of the embryonic midline glial cells which are necessary for the formation of distinct segmental commissures. The chain is Cytochrome P450 307a1 (spo) from Drosophila melanogaster (Fruit fly).